The primary structure comprises 264 residues: Somatomedin-B and thrombospondin type-1 domain-containing protein (264 aa).

The signal sequence occupies residues 1-20; that stretch reads MKTLWMVLCALARLWPGALA. The SMB domain maps to 24-75; sequence EAGRCCPGRDPACFARGWRLDRVYGTCFCDQACRLTGDCCFDYDRACPARPC. 7 disulfides stabilise this stretch: Cys-28-Cys-36, Cys-28-Cys-52, Cys-36-Cys-70, Cys-50-Cys-52, Cys-50-Cys-63, Cys-56-Cys-62, and Cys-63-Cys-70. A TSP type-1 domain is found at 74–125; the sequence is PCFVGEWSPWSGCAGQCQPTTRVRRRSVRQEPLNGGAPCPPLEERAGCLEYS. A glycan (N-linked (GlcNAc...) asparagine) is linked at Asn-227.

The protein belongs to the thrombospondin family.

It is found in the secreted. The protein localises to the extracellular space. Its subcellular location is the extracellular matrix. In Mus musculus (Mouse), this protein is Somatomedin-B and thrombospondin type-1 domain-containing protein (Sbspon).